The sequence spans 1616 residues: Replicase large subunit (1616 aa).

Positions 50-458 are methyltransferase; sequence FSKVISEEQT…QSLSMTFYLH (409 aa). Positions 72–281 constitute an Alphavirus-like MT domain; sequence TFYNTQNAVH…HSYSNILKYV (210 aa). One can recognise a (+)RNA virus helicase ATP-binding domain in the interval 801-963; that stretch reads VVYSDMAKLR…KLEVDEVETR (163 aa). Positions 830–1085 are helicase; the sequence is LVDGVPGCGK…RHTCSLKYYT (256 aa). 833–840 is a binding site for ATP; that stretch reads GVPGCGKT. The region spanning 964–1116 is the (+)RNA virus helicase C-terminal domain; sequence RTTLRCPADV…DMYKVDAGTQ (153 aa). A RdRp catalytic domain is found at 1380 to 1493; that stretch reads MDVLELDISK…YFPKGCEFPD (114 aa).

The protein belongs to the ssRNA positive-strand viruses RNA-directed RNA polymerase family. As to quaternary structure, heterodimer of a large and a small subunit.

The catalysed reaction is RNA(n) + a ribonucleoside 5'-triphosphate = RNA(n+1) + diphosphate. It catalyses the reaction ATP + H2O = ADP + phosphate + H(+). Is an RNA-dependent RNA polymerase active in viral RNA replication. In terms of biological role, is a methyltransferase active in RNA capping and an RNA helicase. Methyltransferase displays a cytoplasmic capping enzyme activity. This function is necessary since all viral RNAs are synthesized in the cytoplasm, and host capping enzymes are restricted to the nucleus. Helicase region probably exhibits NTPase and RNA unwinding activities (Potential). It also acts as a suppressor of RNA-mediated gene silencing, also known as post-transcriptional gene silencing (PTGS), a mechanism of plant viral defense that limits the accumulation of viral RNAs. May mediate silencing suppression through either inhibition of HEN1-mediated siRNA or siRNA demethylation. The sequence is that of Replicase large subunit from Nicotiana tabacum (Common tobacco).